The primary structure comprises 443 residues: sn-2 acyl-lipid omega-3 desaturase (ferredoxin), chloroplastic (443 aa).

A chloroplast-targeting transit peptide spans M1–R51. A run of 2 helical transmembrane segments spans residues M120 to L140 and W143 to L163. The short motif at H165–H169 is the Histidine box-1 element. The Histidine box-2 signature appears at H201–H205. 2 helical membrane passes run T281–V301 and L304–L324. The Histidine box-3 signature appears at H368–H372.

The protein belongs to the fatty acid desaturase type 1 family. Highly expressed in leaves and cotyledons, while no or little expression detected in mature seeds, roots and stems.

The protein localises to the plastid. It is found in the chloroplast membrane. The catalysed reaction is a (7Z,10Z)-hexadecadienoyl-containing glycerolipid + 2 reduced [2Fe-2S]-[ferredoxin] + O2 + 2 H(+) = a (7Z,10Z,13Z)-hexadecatrienoyl-containing glycerolipid + 2 oxidized [2Fe-2S]-[ferredoxin] + 2 H2O. It catalyses the reaction a (9Z,12Z)-octadecadienoyl-containing glycerolipid + 2 reduced [2Fe-2S]-[ferredoxin] + O2 + 2 H(+) = (9Z,12Z,15Z)-octadecatrienoyl-containing glycerolipid + 2 oxidized [2Fe-2S]-[ferredoxin] + 2 H2O. It functions in the pathway lipid metabolism; polyunsaturated fatty acid biosynthesis. In terms of biological role, chloroplast omega-3 fatty acid desaturase introduces the third double bond in the biosynthesis of 18:3, and probably also 16:3 fatty acids, important constituents of plant membranes. It is thought to use ferredoxin as an electron donor and to act on fatty acids esterified to galactolipids, sulfolipids and phosphatidylglycerol. The polypeptide is sn-2 acyl-lipid omega-3 desaturase (ferredoxin), chloroplastic (Helianthus annuus (Common sunflower)).